The following is a 280-amino-acid chain: Urease accessory protein UreD 1 (280 aa).

This sequence belongs to the UreD family. In terms of assembly, ureD, UreF and UreG form a complex that acts as a GTP-hydrolysis-dependent molecular chaperone, activating the urease apoprotein by helping to assemble the nickel containing metallocenter of UreC. The UreE protein probably delivers the nickel.

It is found in the cytoplasm. Its function is as follows. Required for maturation of urease via the functional incorporation of the urease nickel metallocenter. This chain is Urease accessory protein UreD 1, found in Bradyrhizobium sp. (strain BTAi1 / ATCC BAA-1182).